The primary structure comprises 530 residues: Methionine--tRNA ligase (530 aa).

Residues 18-28 (YYVNDVPHIGS) carry the 'HIGH' region motif. Zn(2+) contacts are provided by Cys133, Cys136, Cys151, and His154. A 'KMSKS' region motif is present at residues 307–311 (KMGKS). Lys310 provides a ligand contact to ATP.

The protein belongs to the class-I aminoacyl-tRNA synthetase family. MetG type 2A subfamily. In terms of assembly, monomer. Zn(2+) is required as a cofactor.

The protein localises to the cytoplasm. It catalyses the reaction tRNA(Met) + L-methionine + ATP = L-methionyl-tRNA(Met) + AMP + diphosphate. Its function is as follows. Is required not only for elongation of protein synthesis but also for the initiation of all mRNA translation through initiator tRNA(fMet) aminoacylation. This Nostoc sp. (strain PCC 7120 / SAG 25.82 / UTEX 2576) protein is Methionine--tRNA ligase.